Reading from the N-terminus, the 276-residue chain is NADPH-dependent 7-cyano-7-deazaguanine reductase (276 aa).

83-85 is a binding site for substrate; it reads IES. 85 to 86 provides a ligand contact to NADPH; it reads SK. Cysteine 184 (thioimide intermediate) is an active-site residue. Residue aspartate 191 is the Proton donor of the active site. Substrate is bound at residue 223–224; that stretch reads HE. Residue 252 to 253 participates in NADPH binding; that stretch reads RG.

It belongs to the GTP cyclohydrolase I family. QueF type 2 subfamily. Homodimer.

It is found in the cytoplasm. The enzyme catalyses 7-aminomethyl-7-carbaguanine + 2 NADP(+) = 7-cyano-7-deazaguanine + 2 NADPH + 3 H(+). Its pathway is tRNA modification; tRNA-queuosine biosynthesis. Catalyzes the NADPH-dependent reduction of 7-cyano-7-deazaguanine (preQ0) to 7-aminomethyl-7-deazaguanine (preQ1). The chain is NADPH-dependent 7-cyano-7-deazaguanine reductase from Pseudomonas putida (strain ATCC 47054 / DSM 6125 / CFBP 8728 / NCIMB 11950 / KT2440).